Here is a 174-residue protein sequence, read N- to C-terminus: Adenylate kinase (174 aa).

The interval S12–V41 is NMP. AMP-binding positions include T13, R18, G39–V41, G67–R70, and Q74. Residues G104–D141 form an LID region. ATP is bound by residues R105 and T114 to Y115. Residues R138 and R149 each coordinate AMP.

This sequence belongs to the adenylate kinase family. In terms of assembly, monomer.

Its subcellular location is the cytoplasm. The enzyme catalyses AMP + ATP = 2 ADP. It functions in the pathway purine metabolism; AMP biosynthesis via salvage pathway; AMP from ADP: step 1/1. In terms of biological role, catalyzes the reversible transfer of the terminal phosphate group between ATP and AMP. Plays an important role in cellular energy homeostasis and in adenine nucleotide metabolism. This chain is Adenylate kinase, found in Neisseria cinerea.